We begin with the raw amino-acid sequence, 57 residues long: Large ribosomal subunit protein bL32 (57 aa).

Residues Met1–Gln19 show a composition bias toward basic residues. The segment at Met1 to Ala22 is disordered.

The protein belongs to the bacterial ribosomal protein bL32 family.

The polypeptide is Large ribosomal subunit protein bL32 (Rhodococcus jostii (strain RHA1)).